The chain runs to 183 residues: Ribosome rescue factor SmrB (183 aa).

The 76-residue stretch at 98-173 (LDLHGLTQMQ…GDAALLVLIE (76 aa)) folds into the Smr domain.

The protein belongs to the SmrB family. Associates with collided ribosomes, but not with correctly translating polysomes.

Functionally, acts as a ribosome collision sensor. Detects stalled/collided disomes (pairs of ribosomes where the leading ribosome is stalled and a second ribosome has collided with it) and endonucleolytically cleaves mRNA at the 5' boundary of the stalled ribosome. Stalled/collided disomes form a new interface (primarily via the 30S subunits) that binds SmrB. Cleaved mRNA becomes available for tmRNA ligation, leading to ribosomal subunit dissociation and rescue of stalled ribosomes. This Enterobacter sp. (strain 638) protein is Ribosome rescue factor SmrB.